A 353-amino-acid polypeptide reads, in one-letter code: NADH-quinone oxidoreductase subunit H (353 aa).

The next 9 membrane-spanning stretches (helical) occupy residues 8 to 28 (LLVY…IFIW), 75 to 95 (GVFW…FAAI), 108 to 128 (IGIL…FMAG), 148 to 168 (VSYE…TGSL), 179 to 199 (VPFI…AMAE), 229 to 249 (LFYL…TTLF), 258 to 278 (LHPV…IIWV), 297 to 317 (FLLP…LIAP), and 319 to 339 (INTA…VLLF).

This sequence belongs to the complex I subunit 1 family. In terms of assembly, NDH-1 is composed of 14 different subunits. Subunits NuoA, H, J, K, L, M, N constitute the membrane sector of the complex.

It is found in the cell membrane. It catalyses the reaction a quinone + NADH + 5 H(+)(in) = a quinol + NAD(+) + 4 H(+)(out). Its function is as follows. NDH-1 shuttles electrons from NADH, via FMN and iron-sulfur (Fe-S) centers, to quinones in the respiratory chain. The immediate electron acceptor for the enzyme in this species is believed to be ubiquinone. Couples the redox reaction to proton translocation (for every two electrons transferred, four hydrogen ions are translocated across the cytoplasmic membrane), and thus conserves the redox energy in a proton gradient. This subunit may bind ubiquinone. This Dehalococcoides mccartyi (strain CBDB1) protein is NADH-quinone oxidoreductase subunit H.